The primary structure comprises 265 residues: Putative cysteine-rich receptor-like protein kinase At4g11521 (265 aa).

A signal peptide spans 1 to 23; sequence MMLNTLFLPIFLFFLITFDYVST. Gnk2-homologous domains are found at residues 24-122 and 128-241; these read QTCF…NISF and MEPS…LYPF. Residues Asn-34, Asn-102, and Asn-119 are each glycosylated (N-linked (GlcNAc...) asparagine). Asn-247 is a glycosylation site (N-linked (GlcNAc...) asparagine).

Belongs to the protein kinase superfamily. Ser/Thr protein kinase family. CRK subfamily.

The protein resides in the secreted. The chain is Putative cysteine-rich receptor-like protein kinase At4g11521 from Arabidopsis thaliana (Mouse-ear cress).